Reading from the N-terminus, the 48-residue chain is Sperm protamine R3 isoform 1 (48 aa).

Residues 1 to 29 (ARRRHSMKKKRKSVRRRKTRKNQRKRKNS) are compositionally biased toward basic residues. The segment at 1–48 (ARRRHSMKKKRKSVRRRKTRKNQRKRKNSLGRSFKQHGFLKQPPRFRP) is disordered.

As to expression, testis.

The protein localises to the nucleus. The protein resides in the chromosome. In terms of biological role, protamines substitute for histones in the chromatin of sperm during the haploid phase of spermatogenesis. They compact sperm DNA into a highly condensed, stable and inactive complex. The protein is Sperm protamine R3 isoform 1 of Hydrolagus colliei (Spotted ratfish).